Here is a 426-residue protein sequence, read N- to C-terminus: Bile acid CoA-transferase BaiF (426 aa).

Residue Asp-168 is the Nucleophile of the active site.

It belongs to the CoA-transferase III family.

It carries out the reaction lithocholoyl-CoA + cholate = choloyl-CoA + lithocholate. It catalyses the reaction deoxycholoyl-CoA + cholate = choloyl-CoA + deoxycholate. The catalysed reaction is allodeoxycholoyl-CoA + cholate = allodeoxycholate + choloyl-CoA. The enzyme catalyses allocholate + deoxycholoyl-CoA = allocholoyl-CoA + deoxycholate. It carries out the reaction allocholate + lithocholoyl-CoA = allocholoyl-CoA + lithocholate. It catalyses the reaction allocholate + allodeoxycholoyl-CoA = allocholoyl-CoA + allodeoxycholate. The catalysed reaction is lithocholoyl-CoA + chenodeoxycholate = chenodeoxycholoyl-CoA + lithocholate. The enzyme catalyses ursodeoxycholate + deoxycholoyl-CoA = ursodeoxycholoyl-CoA + deoxycholate. It carries out the reaction ursodeoxycholate + lithocholoyl-CoA = ursodeoxycholoyl-CoA + lithocholate. It catalyses the reaction allodeoxycholoyl-CoA + ursodeoxycholate = ursodeoxycholoyl-CoA + allodeoxycholate. The catalysed reaction is beta-muricholate + lithocholoyl-CoA = beta-muricholoyl-CoA + lithocholate. The enzyme catalyses beta-muricholate + deoxycholoyl-CoA = beta-muricholoyl-CoA + deoxycholate. It carries out the reaction beta-muricholate + allodeoxycholoyl-CoA = beta-muricholoyl-CoA + allodeoxycholate. It catalyses the reaction choloyl-CoA + H2O = cholate + CoA + H(+). The catalysed reaction is chenodeoxycholoyl-CoA + H2O = chenodeoxycholate + CoA + H(+). The protein operates within lipid metabolism; bile acid biosynthesis. Functionally, functions in the bile acid 7alpha-dehydroxylation pathway, which forms secondary bile acids via the 7alpha-dehydroxylation of primary bile acids, and is carried out by intestinal anaerobic bacteria. Acts as a bile acid CoA transferase with broad bile acid substrate specificity. Catalyzes the transfer of the CoA moiety of secondary bile acid-CoA compounds to primary bile acids. Can use lithocholoyl-CoA, deoxycholoyl-CoA and allodeoxycholoyl-CoA as bile acid CoA donors and cholate, allocholate, chenodeoxycholate, ursodeoxycholate, and beta-muricholate as bile acid CoA acceptors. Also displays CoA hydrolase activity, being able to catalyze the hydrolysis of choloyl-CoA, 3-dehydrocholoyl-CoA, and chenodeoxycholoyl-CoA, releasing CoA and the corresponding free bile acid. However, this latter activity may not represent the actual activity of this enzyme, since using a transferase rather than hydrolase, the bacteria conserve the thioester bond energy, saving ATP molecules. Shows no hydrolytic activity with acetyl-CoA, isovaleryl-CoA, palmitoyl-CoA, or phenylacetyl-CoA as substrates. The protein is Bile acid CoA-transferase BaiF of Clostridium scindens (strain JCM 10418 / VPI 12708).